A 447-amino-acid polypeptide reads, in one-letter code: QAKVTWSLKAAEEAEAVANINCSGHGRAFLDGILSDGSPKCECNTCYTGADCSQKITGCSADVASGDGLFLEEYWQQHKENSAVLVSGWHRTSYFFNPVSNFISFELEKTIKELHEIVGNAAAKDRYIVFGVGVTQLIHGLVISLSPNMTATPCAPQSKVVAHAPYYPVFREQTKYFDKKGYEWKGNAADYVNTSTPEQFIEMVTSPNNPEGLLRHEVIKGCKSIYDMVYYWPHYTPIKYKADEDIMLFTMSKYTGHSGSRFGWALIKDETVYNKLLNYMTKNTEGTSRETQLRSLKILKEVTAMIKTQKGTMRDLNTFGFQKLRERWVNITALLDKSDRFSYQKLPQSEYCNYFRRMRPPSPSYAWVKCEWEEDKDCYQTFQNGRINTQSGEGFEAGSRYVRLSLIKTKDDFDQLMYYLKIMVEAKRKTPLIKQLSNDQISRRPFI.

A propeptide spanning residues 1–2 is cleaved from the precursor; it reads QA. An EGF-like; atypical domain is found at 15-61; sequence EAVANINCSGHGRAFLDGILSDGSPKCECNTCYTGADCSQKITGCSA. Asparagine 21 is a glycosylation site (N-linked (GlcNAc...) asparagine). Disulfide bonds link cysteine 22/cysteine 41, cysteine 43/cysteine 52, and cysteine 46/cysteine 59. 94-102 is a binding site for chloride; it reads YFFNPVSNF. 2 N-linked (GlcNAc...) asparagine glycosylation sites follow: asparagine 148 and asparagine 193. Lysine 253 bears the N6-(pyridoxal phosphate)lysine mark. The N-linked (GlcNAc...) asparagine glycan is linked to asparagine 330. Cysteine 370 and cysteine 378 form a disulfide bridge.

This sequence belongs to the alliinase family. Homodimer. It depends on pyridoxal 5'-phosphate as a cofactor.

The protein resides in the vacuole. The enzyme catalyses an S-alkyl-L-cysteine S-oxide = an S-alkyl sulfenate + 2-aminoprop-2-enoate. This is Alliin lyase from Allium cepa var. aggregatum (Shallot).